The sequence spans 138 residues: PilB-specific inhibitory protein CpiA (138 aa).

Interacts with PilB but not with TfpB.

Functionally, acts as a PilB inhibitor to control natural transformation. Inhibits type IV pili (T4P) extension by specifically binding and inhibiting the pilus extension ATPase PilB but not TfpB. This activity probably modulates T4P extension under different environmental conditions. This chain is PilB-specific inhibitory protein CpiA, found in Acinetobacter baylyi (strain ATCC 33305 / BD413 / ADP1).